The chain runs to 116 residues: Large ribosomal subunit protein uL18 (116 aa).

It belongs to the universal ribosomal protein uL18 family. As to quaternary structure, part of the 50S ribosomal subunit; part of the 5S rRNA/L5/L18/L25 subcomplex. Contacts the 5S and 23S rRNAs.

In terms of biological role, this is one of the proteins that bind and probably mediate the attachment of the 5S RNA into the large ribosomal subunit, where it forms part of the central protuberance. This Hahella chejuensis (strain KCTC 2396) protein is Large ribosomal subunit protein uL18.